The primary structure comprises 190 residues: Vascular endothelial growth factor A (190 aa).

An N-terminal signal peptide occupies residues 1 to 26; sequence MNFLLSWVHWSLALLLYLHHAKWSQA. 3 disulfide bridges follow: Cys51/Cys93, Cys82/Cys127, and Cys86/Cys129. N-linked (GlcNAc...) asparagine glycosylation is present at Asn100.

It belongs to the PDGF/VEGF growth factor family. In terms of assembly, homodimer; disulfide-linked. Also found as heterodimer with PGF. Interacts with NRP1. Interacts with BSG. Interacts with CD82; this interaction inhibits VEGFA-mediated signaling pathway.

It is found in the secreted. Growth factor active in angiogenesis, vasculogenesis and endothelial cell growth. Induces endothelial cell proliferation, promotes cell migration, inhibits apoptosis and induces permeabilization of blood vessels. Binds to the FLT1/VEGFR1 and KDR/VEGFR2 receptors, heparan sulfate and heparin. Binding to NRP1 receptor initiates a signaling pathway needed for motor neuron axon guidance and cell body migration, including for the caudal migration of facial motor neurons from rhombomere 4 to rhombomere 6 during embryonic development. Also binds the DEAR/FBXW7-AS1 receptor. The protein is Vascular endothelial growth factor A (VEGFA) of Sus scrofa (Pig).